Reading from the N-terminus, the 88-residue chain is Apolipoprotein C-I (88 aa).

The first 26 residues, 1–26 (MRLFLSLPVLVVVLAMVLEGPAPTQA), serve as a signal peptide directing secretion.

This sequence belongs to the apolipoprotein C1 family.

It is found in the secreted. Functionally, inhibitor of lipoprotein binding to the low density lipoprotein (LDL) receptor, LDL receptor-related protein, and very low density lipoprotein (VLDL) receptor. Associates with high density lipoproteins (HDL) and the triacylglycerol-rich lipoproteins in the plasma and makes up about 10% of the protein of the VLDL and 2% of that of HDL. Appears to interfere directly with fatty acid uptake and is also the major plasma inhibitor of cholesteryl ester transfer protein (CETP). Binds free fatty acids and reduces their intracellular esterification. Modulates the interaction of APOE with beta-migrating VLDL and inhibits binding of beta-VLDL to the LDL receptor-related protein. This chain is Apolipoprotein C-I (APOC1), found in Leptonychotes weddellii (Weddell seal).